Here is a 511-residue protein sequence, read N- to C-terminus: Histidine ammonia-lyase (511 aa).

A cross-link (5-imidazolinone (Ala-Gly)) is located at residues 143 to 145; sequence ASG. Ser144 bears the 2,3-didehydroalanine (Ser) mark.

This sequence belongs to the PAL/histidase family. Post-translationally, contains an active site 4-methylidene-imidazol-5-one (MIO), which is formed autocatalytically by cyclization and dehydration of residues Ala-Ser-Gly.

The protein localises to the cytoplasm. It catalyses the reaction L-histidine = trans-urocanate + NH4(+). It functions in the pathway amino-acid degradation; L-histidine degradation into L-glutamate; N-formimidoyl-L-glutamate from L-histidine: step 1/3. The protein is Histidine ammonia-lyase of Vibrio cholerae serotype O1 (strain ATCC 39315 / El Tor Inaba N16961).